Here is a 62-residue protein sequence, read N- to C-terminus: Large ribosomal subunit protein bL28 (62 aa).

Belongs to the bacterial ribosomal protein bL28 family.

The polypeptide is Large ribosomal subunit protein bL28 (Aliarcobacter butzleri (strain RM4018) (Arcobacter butzleri)).